The sequence spans 190 residues: CDP-diacylglycerol--glycerol-3-phosphate 3-phosphatidyltransferase (190 aa).

At 6-17 (GVFNIPMYLTLF) the chain is on the cytoplasmic side. A helical membrane pass occupies residues 18 to 42 (RIIMVPCFVAVFYWPIYWSPMLCTL). The Periplasmic portion of the chain corresponds to 43-65 (IFFIAAITDWFDGFLARRWNQTS). The chain crosses the membrane as a helical span at residues 66-86 (RIGGFLDPIADKIMIITALIL). Topologically, residues 87–91 (ISEHF) are cytoplasmic. A helical membrane pass occupies residues 92–112 (HVWWMTLPISSIIIREILISS). The Periplasmic segment spans residues 113–150 (LRECIARVDNKNNISVIWLSKVKTFAQMLALIALLCRL). Residues 151 to 173 (NEWTVIMGVISLYTAMLLTLWSM) traverse the membrane as a helical segment. Residues 174-186 (CYYVYSVSSILLQ) are Cytoplasmic-facing.

Belongs to the CDP-alcohol phosphatidyltransferase class-I family.

The protein localises to the cell inner membrane. It catalyses the reaction a CDP-1,2-diacyl-sn-glycerol + sn-glycerol 3-phosphate = a 1,2-diacyl-sn-glycero-3-phospho-(1'-sn-glycero-3'-phosphate) + CMP + H(+). Its pathway is phospholipid metabolism; phosphatidylglycerol biosynthesis; phosphatidylglycerol from CDP-diacylglycerol: step 1/2. Its function is as follows. Catalyzes the conversion of cytidine diphosphate diacylglycerol (CDP-DG) and glycerol 3-phosphate into phosphatidylglycerol. Essential for the synthesis of anionic phospholipids, thereby playing a role in balancing the ratio of zwitterionic and anionic phospholipids, which is thought to be important for normal membrane function. The sequence is that of CDP-diacylglycerol--glycerol-3-phosphate 3-phosphatidyltransferase from Blochmanniella floridana.